We begin with the raw amino-acid sequence, 570 residues long: Endo-1,4-beta-xylanase 4 (570 aa).

A signal peptide spans 1–24; that stretch reads MKRFNYGFFHLVLFLISLLLLGSG. 3 N-linked (GlcNAc...) asparagine glycosylation sites follow: asparagine 92, asparagine 190, and asparagine 300. Positions 195-494 constitute a GH10 domain; sequence EGSVISIEQI…TQAGDLIDKL (300 aa). Glutamate 325 functions as the Proton donor in the catalytic mechanism. An N-linked (GlcNAc...) asparagine glycan is attached at asparagine 339. Catalysis depends on glutamate 432, which acts as the Nucleophile. Residue asparagine 545 is glycosylated (N-linked (GlcNAc...) asparagine).

The protein belongs to the glycosyl hydrolase 10 (cellulase F) family.

The enzyme catalyses Endohydrolysis of (1-&gt;4)-beta-D-xylosidic linkages in xylans.. It functions in the pathway glycan degradation; xylan degradation. Binds to and hydrolyzes insoluble and soluble xylan substrates. In Arabidopsis thaliana (Mouse-ear cress), this protein is Endo-1,4-beta-xylanase 4.